The chain runs to 147 residues: MVHLTPEEKNAVTTLWGKVNVDEVGGEALGRLLVVYPWTQRFFESFGDLSSPDAVMGNPKVKAHGKKVLGAFSDGLNHLDNLKGTFAQLSELHCDKLHVDPENFKLLGNVLVCVLAHHFGKEFTPQVQAAYQKVVAGVANALAHKYH.

The residue at position 2 (V2) is an N-acetylvaline. Residues 3 to 147 (HLTPEEKNAV…VANALAHKYH (145 aa)) form the Globin domain. T13 carries the phosphothreonine modification. Phosphoserine is present on S45. K60 is modified (N6-acetyllysine). Position 64 (H64) interacts with heme b. Residue K83 is modified to N6-acetyllysine. A heme b-binding site is contributed by H93. C94 is modified (S-nitrosocysteine). The residue at position 145 (K145) is an N6-acetyllysine.

It belongs to the globin family. In terms of assembly, heterotetramer of two alpha chains and two beta chains. In terms of tissue distribution, red blood cells.

In terms of biological role, involved in oxygen transport from the lung to the various peripheral tissues. The polypeptide is Hemoglobin subunit beta (HBB) (Macaca fascicularis (Crab-eating macaque)).